A 476-amino-acid chain; its full sequence is Cysteine--tRNA ligase (476 aa).

Cys-28 contributes to the Zn(2+) binding site. The 'HIGH' region motif lies at 30-40 (PTVYDHTHLGH). Cys-208, His-233, and Glu-237 together coordinate Zn(2+). A 'KMSKS' region motif is present at residues 265-269 (KMSKS). Residue Lys-268 coordinates ATP.

It belongs to the class-I aminoacyl-tRNA synthetase family. It depends on Zn(2+) as a cofactor.

It is found in the cytoplasm. It catalyses the reaction tRNA(Cys) + L-cysteine + ATP = L-cysteinyl-tRNA(Cys) + AMP + diphosphate. This Methanococcus maripaludis (strain C6 / ATCC BAA-1332) protein is Cysteine--tRNA ligase.